The primary structure comprises 360 residues: tRNA N6-adenosine threonylcarbamoyltransferase (360 aa).

Histidine 111 and histidine 115 together coordinate Fe cation. Substrate-binding positions include 134–138 (LVSGG), aspartate 167, glycine 180, aspartate 184, and asparagine 279. Residue aspartate 307 participates in Fe cation binding.

This sequence belongs to the KAE1 / TsaD family. Fe(2+) is required as a cofactor.

The protein resides in the cytoplasm. The enzyme catalyses L-threonylcarbamoyladenylate + adenosine(37) in tRNA = N(6)-L-threonylcarbamoyladenosine(37) in tRNA + AMP + H(+). In terms of biological role, required for the formation of a threonylcarbamoyl group on adenosine at position 37 (t(6)A37) in tRNAs that read codons beginning with adenine. Is involved in the transfer of the threonylcarbamoyl moiety of threonylcarbamoyl-AMP (TC-AMP) to the N6 group of A37, together with TsaE and TsaB. TsaD likely plays a direct catalytic role in this reaction. The chain is tRNA N6-adenosine threonylcarbamoyltransferase from Acaryochloris marina (strain MBIC 11017).